We begin with the raw amino-acid sequence, 897 residues long: Protein SAP1 (897 aa).

Disordered regions lie at residues 112–144, 195–219, 302–398, 413–438, and 456–561; these read EEPA…PVFQ, PSKP…PPLK, QMSD…TKST, SKSN…PNSV, and KKVA…REEP. Residues 120–137 are compositionally biased toward polar residues; that stretch reads MPSSKTYTNHSSSFTRST. Residues 209-219 show a composition bias toward basic and acidic residues; the sequence is NPIEHNDPPLK. The segment covering 307–321 has biased composition (low complexity); sequence SVTSSTSSNKSVSSS. Positions 364 to 380 are enriched in polar residues; the sequence is LETSTTMDSSKIRNPQI. The segment covering 468–478 has biased composition (basic residues); the sequence is KKSHPILKSKT. A compositionally biased stretch (low complexity) spans 480-496; the sequence is KVPNSSSKKTSSHPSRP. Over residues 497-523 the composition is skewed to polar residues; the sequence is VSNSKPYSHGASQNKKPSKNQTTSMSK. The residue at position 536 (Ser536) is a Phosphoserine. An ATP-binding site is contributed by 645–652; sequence GPPGTGKT.

It belongs to the AAA ATPase family. In terms of assembly, interacts with SPT2/SIN1.

In Saccharomyces cerevisiae (strain ATCC 204508 / S288c) (Baker's yeast), this protein is Protein SAP1 (SAP1).